Reading from the N-terminus, the 228-residue chain is Early nodulin-like protein 18 (228 aa).

Residues 1–26 form the signal peptide; it reads MSPSCSSCVNVLLIMCLMLLSLSADA. The region spanning 28–148 is the Phytocyanin domain; it reads KNYTVGESTG…GQHFMINVTH (121 aa). N-linked (GlcNAc...) asparagine glycosylation is found at asparagine 29, asparagine 71, asparagine 94, and asparagine 145. A disulfide bridge connects residues cysteine 86 and cysteine 136. Residues 148–211 form a disordered region; it reads HGQGLPDSSS…VHSKKSSSST (64 aa). Low complexity predominate over residues 153–170; sequence PDSSSPDDAAAPGPSESS. Basic and acidic residues predominate over residues 188–204; that stretch reads DHPKDIESADDDKEVHS. Serine 204 carries GPI-anchor amidated serine lipidation. A propeptide spans 205 to 228 (removed in mature form); the sequence is KKSSSSTTKTSLFCFVFMGLFASF.

This sequence belongs to the early nodulin-like (ENODL) family. In terms of tissue distribution, mostly expressed in seedlings, roots and flowers, and, to a lower extent, in leaves, stems and seeds.

It localises to the cell membrane. May act as a carbohydrate transporter. This is Early nodulin-like protein 18 from Arabidopsis thaliana (Mouse-ear cress).